The primary structure comprises 419 residues: MKTSLRTLSVALAAALVSPSVLAIEKIDFHGYMRAGVGVSSDGGLAEWQKTMVGRLGNESDTYGEIGLGAEVYKKEDVSFYLESMVSMLSDGSNDSETTIGDDAQFGLRQLNLQIKGLIPGDKEAVIWGGKRYYQRHDLHIIDTKYWNISGSGAGIENYTVGPGAVSVAWVRGDANDVDTRITGDSDVNINYIDVRYAGFKPWAGSWTEVGIDYAMPNPTKQQKEYGGLYDADNAVMLTGEISQDMFGGYNKLVLQYANKGLAQNMISQGGGWYDMWHKTDEAKGYRVINTGLIPITDKFSFNHVLTWGSANDITEYTDKTNLISLVGRAQYQFTQYVRAIGEVGGFYQKDTYHNGSNYKQGGEKYTIALGLAEGPDFLSRPELRVFASYLNDSENGKPFEDGTSNDTWNFGVQVEAWW.

The N-terminal stretch at 1-23 (MKTSLRTLSVALAAALVSPSVLA) is a signal peptide.

It belongs to the porin LamB (TC 1.B.3) family. Homotrimer formed of three 18-stranded antiparallel beta-barrels, containing three independent channels.

Its subcellular location is the cell outer membrane. It carries out the reaction beta-maltose(in) = beta-maltose(out). Functionally, involved in the transport of maltose and maltodextrins. The protein is Maltoporin 2 of Yersinia pseudotuberculosis serotype O:1b (strain IP 31758).